Here is a 106-residue protein sequence, read N- to C-terminus: UPF0145 protein VC_A0951 (106 aa).

This sequence belongs to the UPF0145 family.

In Vibrio cholerae serotype O1 (strain ATCC 39315 / El Tor Inaba N16961), this protein is UPF0145 protein VC_A0951.